The sequence spans 250 residues: 3-deoxy-manno-octulosonate cytidylyltransferase (250 aa).

The protein belongs to the KdsB family.

The protein localises to the cytoplasm. It catalyses the reaction 3-deoxy-alpha-D-manno-oct-2-ulosonate + CTP = CMP-3-deoxy-beta-D-manno-octulosonate + diphosphate. It participates in nucleotide-sugar biosynthesis; CMP-3-deoxy-D-manno-octulosonate biosynthesis; CMP-3-deoxy-D-manno-octulosonate from 3-deoxy-D-manno-octulosonate and CTP: step 1/1. It functions in the pathway bacterial outer membrane biogenesis; lipopolysaccharide biosynthesis. Activates KDO (a required 8-carbon sugar) for incorporation into bacterial lipopolysaccharide in Gram-negative bacteria. The polypeptide is 3-deoxy-manno-octulosonate cytidylyltransferase (Francisella tularensis subsp. holarctica (strain FTNF002-00 / FTA)).